The chain runs to 464 residues: CRISPR system endoribonuclease Csm6 (464 aa).

The interval 1–190 is CARF domain; sequence MEDLDALWER…LRILPNPHEA (190 aa). An HEPN domain region spans residues 191 to 464; the sequence is LAEVDALFAK…LSPEPVPLGF (274 aa).

This sequence belongs to the CRISPR-associated Csm6 family. Homodimer. The protein forms a twisted, head-to-head dimer; the composite ssRNase active site is formed at the dimer interface. Does not require a metal cofactor. is required as a cofactor.

With respect to regulation, non-specific ssRNase activity is allosterically activated about 1000-fold by cyclic tetraadenylate (cA4), which probably binds to its CARF domain. Functionally, CRISPR (clustered regularly interspaced short palindromic repeat) is an adaptive immune system that provides protection against mobile genetic elements (viruses, transposable elements and conjugative plasmids). CRISPR clusters contain spacers, sequences complementary to antecedent mobile elements, and target invading nucleic acids. CRISPR clusters are transcribed and processed into CRISPR RNA (crRNA). The type III-A Csm effector complex binds crRNA and acts as a crRNA-guided RNase, DNase and cyclic oligoadenylate synthase; binding of target RNA cognate to the crRNA is required for all activities. This protein is not part of the Csm effector complex. Its function is as follows. A single-strand-specific endoribonuclease (ssRNase) producing free 5'-OH. Activity is approximately 1000-fold stimulated by cyclic oligoadenylate (cOA); only cyclic tetraadenylate (cA4) stimulates the ssRNase activity while linear oligoadenylates do not activate the RNase. Another study showed stimulation by linear tetraadenylate at very high concentrations, but did not examine stimulation by cA4. The polypeptide is CRISPR system endoribonuclease Csm6 (Thermus thermophilus (strain ATCC 27634 / DSM 579 / HB8)).